A 132-amino-acid chain; its full sequence is MTMTDPIADMLTRLRNASAAKHETVDMPYSKFKANIAEILKREGYIKDFTAKEAKVGQTLEVTLKYGPNGERSIQGIKRISKPGLRRYAKSDALPMPLGGLGIAIISTSSGLLTQKECLDRGIGGEIVAFVW.

The protein belongs to the universal ribosomal protein uS8 family. In terms of assembly, part of the 30S ribosomal subunit. Contacts proteins S5 and S12.

In terms of biological role, one of the primary rRNA binding proteins, it binds directly to 16S rRNA central domain where it helps coordinate assembly of the platform of the 30S subunit. This Bifidobacterium adolescentis (strain ATCC 15703 / DSM 20083 / NCTC 11814 / E194a) protein is Small ribosomal subunit protein uS8.